Consider the following 363-residue polypeptide: Succinyl-diaminopimelate desuccinylase (363 aa).

Position 63 (H63) interacts with Zn(2+). Residue D65 is part of the active site. D94 contributes to the Zn(2+) binding site. The active-site Proton acceptor is the E123. Zn(2+) is bound by residues E124, E152, and H337.

The protein belongs to the peptidase M20A family. DapE subfamily. As to quaternary structure, homodimer. It depends on Zn(2+) as a cofactor. The cofactor is Co(2+).

It carries out the reaction N-succinyl-(2S,6S)-2,6-diaminopimelate + H2O = (2S,6S)-2,6-diaminopimelate + succinate. It participates in amino-acid biosynthesis; L-lysine biosynthesis via DAP pathway; LL-2,6-diaminopimelate from (S)-tetrahydrodipicolinate (succinylase route): step 3/3. Catalyzes the hydrolysis of N-succinyl-L,L-diaminopimelic acid (SDAP), forming succinate and LL-2,6-diaminopimelate (DAP), an intermediate involved in the bacterial biosynthesis of lysine and meso-diaminopimelic acid, an essential component of bacterial cell walls. The chain is Succinyl-diaminopimelate desuccinylase from Campylobacter concisus (strain 13826).